Reading from the N-terminus, the 284-residue chain is Bifunctional protein FolD (284 aa).

Residues 164–166 (GRS) and serine 189 contribute to the NADP(+) site.

This sequence belongs to the tetrahydrofolate dehydrogenase/cyclohydrolase family. Homodimer.

It carries out the reaction (6R)-5,10-methylene-5,6,7,8-tetrahydrofolate + NADP(+) = (6R)-5,10-methenyltetrahydrofolate + NADPH. It catalyses the reaction (6R)-5,10-methenyltetrahydrofolate + H2O = (6R)-10-formyltetrahydrofolate + H(+). It functions in the pathway one-carbon metabolism; tetrahydrofolate interconversion. Its function is as follows. Catalyzes the oxidation of 5,10-methylenetetrahydrofolate to 5,10-methenyltetrahydrofolate and then the hydrolysis of 5,10-methenyltetrahydrofolate to 10-formyltetrahydrofolate. The protein is Bifunctional protein FolD of Listeria monocytogenes serovar 1/2a (strain ATCC BAA-679 / EGD-e).